A 1762-amino-acid chain; its full sequence is MADAAASPVGKRLLLLFADPTASASASAPTAAAVVSGDPGPALRTRAWRAGTVRAMSGAVPQDLAIFVEFDGCNWKQHSWVKVHAEDVLALLLEGSLVWAPRKDPVLLQGTRVPVAQWPALTFTPLVDKLGLGSVVPVEYLVDRELRFLSDANGMHLFQMGTDVQNQILLEHAALRETVNALISDQKLQEIFSRGPYSVQGHRVKVYQPEGEEVWLCGVVSRQDSVTRLMEVSITETGEVKSVDPRLTHVMLMDSSTPQSEGGTIKAVKSSKGKKKRESIEGRDGRRRKSASDSGCDPATKKLKGDRGEVDSNGSDGGEASRGPWKGGNASGEPGLEQRAKQPPSTFVPQINRNIRFATYTKENGRTLVVQDEPVGGDTPVPFTPYASATGQTPLAPEVGGAENKEAGKTLEQVSQGMVASAAVVTTASSTPTTVRISDTGLASGTGPEKQKGSWSQASGENSRNSSLASSGFGVSLSSLSQPLTFGSGRSQSNGVLATDNKPLGFSFSCSSASESQKDSDLSKNLFFQCMSQNVPSTNYLSRVSESVADDSSSRDSFTQSLESLTSGLCKGRSVLGADTQPGPKAGSSVDRKVPAESMPTLTPAFPRSLLNTRTPENHENLFLQPPKLSREEPSNPFLAFVEKVEHSPFSSFVSQASGSSSSATSVTSKATASWPESHSSAESAPLAKKKPLFITTDSSKLVSGVLGSALSTGSPSLSAVGNGRSSSPTNSLTQPIEMPTLSSSPTEERPTVGPGQQDNPLLKTFSTVFGRHSGSFLSAPAEFAQENKAPFEAVKRFSLDERSLACRQDSDSSTNSDLSDLSDSEEQLQAKSGLKGIPEHLMGKLGPNGERSAELLLGKGKGKQAPKGRPRTAPLKVGQSVLKDVSKVRKLKQSGEPFLQDGSCINVAPHLHKCRECRLERYRKFKEQEQDDSTVACRFFHFRRLVFTRKGVLRVEGFLSPQQSDPDAMNLWIPSSSLAEGIDLETSKYILANVGDQFCQLVMSEKEAMMMVEPHQKVAWKRAVRGVREMCDVCETTLFNIHWVCRKCGFGVCLDCYRLRKSRPRSETEEMGDEEVFSWLKCAKGQSHEPENLMPTQIIPGTALYNIGDMVHAARGKWGIKANCPCISRQSKSVLRPAVTNGISQLPSVTPSASSGNETTFSSGGGAAAVTNPEPDQVPKGAGTDGRSEEPLKAEGSASNSNSELKAIRPPCPDTAPPSSALHWLADLATQKAKEETKDAGSLRSVLNKESHSPFGLDSFNSTAKVSPLTPKLFNSLLLGPTASNSKTEGSSLRDLLHSGPGKLPQTPLDTGIPFPPVFSSSSAVAKSKASLPDFLDHIIASVVENKKTSDPSKRSCNLTDTQKEVKEMAMGLNVLDPHTSHSWLCDGRLLCLHDPSNKNNWKIFRECWKQGQPVLVSGVHKKLKSELWKPEAFSQEFGDQDVDLVNCRNCAIISDVKVRDFWDGFEIICKRLRSEDGQPMVLKLKDWPPGEDFRDMMPTRFEDLMENLPLPEYTKRDGRLNLASRLPSYFVRPDLGPKMYNAYGLITAEDRRVGTTNLHLDVSDAVNVMVYVGIPVGEGAHDEEVLKTIDEGDADEVTKQRIHDGKEKPGALWHIYAAKDAEKIRELLRKVGEEQGQENPPDHDPIHDQSWYLDQILRKRLFEEYGVQGWAIVQFLGDAVFIPAGAPHQVHNLYSCIKVAEDFVSPEHVKHCFRLTQEFRHLSNTHTNHEDKLQVKNIIYHAVKDAVGTLKAHESKLARS.

At Ala2 the chain carries N-acetylalanine. Disordered regions lie at residues 253 to 350 (MDSS…FVPQ) and 426 to 468 (TTAS…NSSL). Positions 299-310 (ATKKLKGDRGEV) are enriched in basic and acidic residues. A compositionally biased stretch (low complexity) spans 426–435 (TTASSTPTTV). The segment covering 453-465 (GSWSQASGENSRN) has biased composition (polar residues). Residues Ser493, Ser547, Ser557, and Ser561 each carry the phosphoserine modification. Residues 574-613 (SVLGADTQPGPKAGSSVDRKVPAESMPTLTPAFPRSLLNT) form a disordered region. Phosphothreonine is present on Thr615. The segment covering 713-746 (TGSPSLSAVGNGRSSSPTNSLTQPIEMPTLSSSP) has biased composition (polar residues). The tract at residues 713-763 (TGSPSLSAVGNGRSSSPTNSLTQPIEMPTLSSSPTEERPTVGPGQQDNPLL) is disordered. Ser767, Ser774, and Ser779 each carry phosphoserine. A Glycyl lysine isopeptide (Lys-Gly) (interchain with G-Cter in SUMO2) cross-link involves residue Lys789. Ser799 is modified (phosphoserine). The interval 806 to 853 (ACRQDSDSSTNSDLSDLSDSEEQLQAKSGLKGIPEHLMGKLGPNGERS) is disordered. The segment at 1032–1057 (CDVCETTLFNIHWVCRKCGFGVCLDC) adopts a C6-type zinc-finger fold. The span at 1146–1163 (QLPSVTPSASSGNETTFS) shows a compositional bias: polar residues. The disordered stretch occupies residues 1146–1217 (QLPSVTPSAS…AIRPPCPDTA (72 aa)). Ser1254 and Ser1260 each carry phosphoserine. The segment at 1285 to 1306 (SNSKTEGSSLRDLLHSGPGKLP) is disordered. Residues 1294 to 1298 (LRDLL) carry the LXXLL motif motif. Residues 1499–1722 (MPTRFEDLME…HCFRLTQEFR (224 aa)) enclose the JmjC domain. 3 residues coordinate Fe cation: His1561, Asp1563, and His1690.

This sequence belongs to the JHDM2 histone demethylase family. The cofactor is Fe(2+).

The protein resides in the nucleus. It carries out the reaction N(6),N(6)-dimethyl-L-lysyl(9)-[histone H3] + 2 2-oxoglutarate + 2 O2 = L-lysyl(9)-[histone H3] + 2 formaldehyde + 2 succinate + 2 CO2. Its function is as follows. Histone demethylase that specifically demethylates 'Lys-9' of histone H3, thereby playing a central role in histone code. Demethylation of Lys residue generates formaldehyde and succinate May have tumor suppressor activity. The protein is Lysine-specific demethylase 3B (Kdm3b) of Mus musculus (Mouse).